Consider the following 544-residue polypeptide: Methionine--tRNA ligase (544 aa).

The 'HIGH' region signature appears at 10–20; it reads PYANGSLHLGH. Zn(2+) is bound by residues cysteine 141, cysteine 144, cysteine 153, and cysteine 156. The 'KMSKS' region motif lies at 329–333; the sequence is KLSTS. Residue threonine 332 participates in ATP binding.

The protein belongs to the class-I aminoacyl-tRNA synthetase family. MetG type 1 subfamily. As to quaternary structure, monomer. The cofactor is Zn(2+).

It localises to the cytoplasm. It carries out the reaction tRNA(Met) + L-methionine + ATP = L-methionyl-tRNA(Met) + AMP + diphosphate. Its function is as follows. Is required not only for elongation of protein synthesis but also for the initiation of all mRNA translation through initiator tRNA(fMet) aminoacylation. In Bacillus cereus (strain B4264), this protein is Methionine--tRNA ligase.